We begin with the raw amino-acid sequence, 190 residues long: Zinc metalloproteinase/disintegrin (190 aa).

Residues 1–11 (NHNPECIVNEP) enclose the Peptidase M12B domain. Residues 19-105 (PPVCGNELLE…ECPADVFHKN (87 aa)) form the Disintegrin domain. Ca(2+) contacts are provided by valine 21, asparagine 24, leucine 26, glutamate 28, glutamate 31, and aspartate 34. Disulfide bonds link cysteine 33-cysteine 51, cysteine 35-cysteine 46, cysteine 45-cysteine 68, cysteine 59-cysteine 65, cysteine 64-cysteine 90, and cysteine 77-cysteine 97. Positions 83-85 (ECD) match the D/ECD-tripeptide motif. Ca(2+)-binding residues include aspartate 85, proline 86, glutamate 88, aspartate 100, and valine 101. Positions 104 to 190 (KNGQPCLDNY…DNSPGQNGPC (87 aa)) are excised as a propeptide.

The protein belongs to the venom metalloproteinase (M12B) family. P-III subfamily. Monomer. Zn(2+) is required as a cofactor. As to expression, expressed by the venom gland.

It localises to the secreted. In terms of biological role, impairs hemostasis in the envenomed animal. Its function is as follows. Inhibits platelet aggregation induced by ADP, thrombin, platelet-activating factor and collagen. Acts by inhibiting fibrinogen interaction with platelet receptors GPIIb/GPIIIa (ITGA2B/ITGB3). This is Zinc metalloproteinase/disintegrin from Gloydius brevicauda (Korean slamosa snake).